We begin with the raw amino-acid sequence, 311 residues long: Formimidoylglutamase (311 aa).

Residues His130, Asp155, His157, Asp159, Cys242, and Asp244 each coordinate Mn(2+).

This sequence belongs to the arginase family. Mn(2+) is required as a cofactor.

The catalysed reaction is N-formimidoyl-L-glutamate + H2O = formamide + L-glutamate. The protein operates within amino-acid degradation; L-histidine degradation into L-glutamate; L-glutamate from N-formimidoyl-L-glutamate (hydrolase route): step 1/1. Catalyzes the conversion of N-formimidoyl-L-glutamate to L-glutamate and formamide. In Staphylococcus aureus (strain Mu3 / ATCC 700698), this protein is Formimidoylglutamase.